The primary structure comprises 103 residues: Conantokin-Br (103 aa).

A signal peptide spans 1-21 (MQLYTYLYLLVPLVTFHLILG). Positions 22–79 (TGTLDHGGALTERRSTDATALKPEPVLQKSAARSTDDNGKDRLTQMKRILKKRGKNAR) are excised as a propeptide. Positions 34-64 (RRSTDATALKPEPVLQKSAARSTDDNGKDRL) are disordered. Residues 55-64 (STDDNGKDRL) are compositionally biased toward basic and acidic residues. 4 positions are modified to 4-carboxyglutamate: glutamate 82, glutamate 83, glutamate 89, and glutamate 93. A divalent metal cation-binding residues include glutamate 89 and glutamate 93.

The protein belongs to the conotoxin B superfamily. Requires Ca(2+) as cofactor. It depends on Mg(2+) as a cofactor. Expressed by the venom duct.

Its subcellular location is the secreted. Its function is as follows. Conantokins inhibit N-methyl-D-aspartate (NMDA) receptors. This toxin inhibits NR2 subunits N-methyl-D-aspartate (NMDA) receptor-mediated calcium influx in central nervous system neurons in the following order of preference: NR2B/GRIN2B (IC(50)=0.14 uM), NR2D/GRIN2D (IC(50)=0.31 uM), NR2A/GRIN2A (IC(50)=0.68 uM) and NR2C/GRIN2A (IC(50)=4.9 uM), when tested on rat receptors. This Conus sulcatus (Sulcate cone) protein is Conantokin-Br.